A 365-amino-acid chain; its full sequence is PHD finger protein 6 (365 aa).

The residue at position 2 (S2) is an N-acetylserine. Short sequence motifs (nuclear localization signal) lie at residues R13–K16 and R129–K133. Residues Q14–L52 form a C2HC pre-PHD-type 1 zinc finger. An extended PHD1 domain (ePHD1) region spans residues Q14–K132. Residues L80–K132 form a PHD-type 1 zinc finger. Phosphoserine occurs at positions 138, 145, and 155. Residues E139–K211 form a disordered region. Residues K157–K169 carry the Nucleolar localization signal motif. The segment covering K157–N171 has biased composition (basic residues). A Glycyl lysine isopeptide (Lys-Gly) (interchain with G-Cter in SUMO2) cross-link involves residue K173. Phosphoserine occurs at positions 183 and 199. Residues R209–T249 form a C2HC pre-PHD-type 2 zinc finger. The tract at residues R209–S330 is extended PHD2 domain (ePHD2). Residue K227 forms a Glycyl lysine isopeptide (Lys-Gly) (interchain with G-Cter in SUMO2) linkage. Residues M278–S330 form a PHD-type 2 zinc finger. Residues S330 to N365 are disordered. Basic and acidic residues predominate over residues R342 to I352. The segment covering Q354–N365 has biased composition (low complexity). T358 bears the Phosphothreonine mark.

Interacts with UBTF. Interacts with the NuRD complex component RBBP4 (via the nucleolar localization motif), the interaction mediates transcriptional repression activity.

It localises to the nucleus. It is found in the nucleolus. The protein localises to the chromosome. Its subcellular location is the centromere. The protein resides in the kinetochore. Its function is as follows. Transcriptional regulator that associates with ribosomal RNA promoters and suppresses ribosomal RNA (rRNA) transcription. The protein is PHD finger protein 6 (PHF6) of Pongo abelii (Sumatran orangutan).